The sequence spans 330 residues: Aspartate--ammonia ligase (330 aa).

Belongs to the class-II aminoacyl-tRNA synthetase family. AsnA subfamily.

The protein resides in the cytoplasm. It catalyses the reaction L-aspartate + NH4(+) + ATP = L-asparagine + AMP + diphosphate + H(+). Its pathway is amino-acid biosynthesis; L-asparagine biosynthesis; L-asparagine from L-aspartate (ammonia route): step 1/1. This chain is Aspartate--ammonia ligase, found in Serratia proteamaculans (strain 568).